We begin with the raw amino-acid sequence, 395 residues long: Protochlorophyllide reductase B, chloroplastic (395 aa).

Residues 1–59 (MALQAATSFLPSALSARKEGAAKDSAFFGVRLADGLKLDATSLGLRTKRVNTSSVAIRA) constitute a chloroplast transit peptide.

It belongs to the short-chain dehydrogenases/reductases (SDR) family. POR subfamily.

Its subcellular location is the plastid. The protein resides in the chloroplast. The catalysed reaction is chlorophyllide a + NADP(+) = protochlorophyllide a + NADPH + H(+). Its pathway is porphyrin-containing compound metabolism; chlorophyll biosynthesis. Functionally, phototransformation of protochlorophyllide (Pchlide) to chlorophyllide (Chlide). The protein is Protochlorophyllide reductase B, chloroplastic (PORB) of Hordeum vulgare (Barley).